The following is a 233-amino-acid chain: Phosphatidylserine decarboxylase proenzyme (233 aa).

Ser-190 serves as the catalytic Schiff-base intermediate with substrate; via pyruvic acid. Ser-190 is subject to Pyruvic acid (Ser); by autocatalysis.

Belongs to the phosphatidylserine decarboxylase family. PSD-A subfamily. As to quaternary structure, heterodimer of a large membrane-associated beta subunit and a small pyruvoyl-containing alpha subunit. Requires pyruvate as cofactor. Is synthesized initially as an inactive proenzyme. Formation of the active enzyme involves a self-maturation process in which the active site pyruvoyl group is generated from an internal serine residue via an autocatalytic post-translational modification. Two non-identical subunits are generated from the proenzyme in this reaction, and the pyruvate is formed at the N-terminus of the alpha chain, which is derived from the carboxyl end of the proenzyme. The post-translation cleavage follows an unusual pathway, termed non-hydrolytic serinolysis, in which the side chain hydroxyl group of the serine supplies its oxygen atom to form the C-terminus of the beta chain, while the remainder of the serine residue undergoes an oxidative deamination to produce ammonia and the pyruvoyl prosthetic group on the alpha chain.

It localises to the cell membrane. The catalysed reaction is a 1,2-diacyl-sn-glycero-3-phospho-L-serine + H(+) = a 1,2-diacyl-sn-glycero-3-phosphoethanolamine + CO2. The protein operates within phospholipid metabolism; phosphatidylethanolamine biosynthesis; phosphatidylethanolamine from CDP-diacylglycerol: step 2/2. Functionally, catalyzes the formation of phosphatidylethanolamine (PtdEtn) from phosphatidylserine (PtdSer). This Azorhizobium caulinodans (strain ATCC 43989 / DSM 5975 / JCM 20966 / LMG 6465 / NBRC 14845 / NCIMB 13405 / ORS 571) protein is Phosphatidylserine decarboxylase proenzyme.